Consider the following 325-residue polypeptide: MPITRMRMRPWLEMQINSNQIPGLIWINKEEMIFQIPWKHAAKHGWDINKDACLFRSWAIHTGRYKAGEKEPDPKTWKANFRCAMNSLPDIEEVKDQSRNKGSSAVRVYRMLPPLTKNQRKERKSKSSRDAKSKAKRKSCGDSSPDTFSDGLSSSTLPDDHSSYTVPGYMQDLEVEQALTPALSPCAVSSTLPDWHIPVEVVPDSTSDLYNFQVSPMPSTSEATTDEDEEGKLPEDIMKLLEQSEWQPTNVDGKGYLLNEPGVQPTSVYGDFSCKEEPEIDSPGGDIGLSLQRVFTDLKNMDATWLDSLLTPVRLPSIQAIPCAP.

A DNA-binding region (IRF tryptophan pentad repeat) is located at residues 5–113 (RMRMRPWLEM…SAVRVYRMLP (109 aa)). Residue Lys-78 is modified to N6-acetyllysine. A disordered region spans residues 92-165 (EEVKDQSRNK…TLPDDHSSYT (74 aa)). Over residues 141–157 (GDSSPDTFSDGLSSSTL) the composition is skewed to polar residues. Residues Lys-275 and Lys-299 each participate in a glycyl lysine isopeptide (Lys-Gly) (interchain with G-Cter in SUMO) cross-link.

The protein belongs to the IRF family. In terms of assembly, monomer. Homodimer. Interacts with EP300. Interacts with MYD88. Interacts with PIAS3. Interacts with SPOP. Phosphorylated by CK2 and this positively regulates its activity. Post-translationally, sumoylation represses the transcriptional activity and displays enhanced resistance to protein degradation. Sumoylated by UBE2I/UBC9 and SUMO1. Inactivates the tumor suppressor activity. Elevated levels in tumor cells. Major site is Lys-275. Sumoylation is enhanced by PIAS3. Desumoylated by SENP1 in tumor cells and appears to compete with ubiquitination on C-terminal sites. In terms of processing, ubiquitinated in a SPOP-depedent manner. Appears to compete with sumoylation on C-terminal sites.

Its subcellular location is the nucleus. The protein localises to the cytoplasm. With respect to regulation, activated by MYD88. Its function is as follows. Transcriptional regulator which displays a remarkable functional diversity in the regulation of cellular responses. Regulates transcription of IFN and IFN-inducible genes, host response to viral and bacterial infections, regulation of many genes expressed during hematopoiesis, inflammation, immune responses and cell proliferation and differentiation, regulation of the cell cycle and induction of growth arrest and programmed cell death following DNA damage. Stimulates both innate and acquired immune responses through the activation of specific target genes and can act as a transcriptional activator and repressor regulating target genes by binding to an interferon-stimulated response element (ISRE) in their promoters. Has an essentail role in IFNG-dependent immunity to mycobacteria. Competes with the transcriptional repressor ZBED2 for binding to a common consensus sequence in gene promoters. Its target genes for transcriptional activation activity include: genes involved in anti-viral response, such as IFN-alpha/beta, RIGI, TNFSF10/TRAIL, ZBP1, OAS1/2, PIAS1/GBP, EIF2AK2/PKR and RSAD2/viperin; antibacterial response, such as GBP2, GBP5 and NOS2/INOS; anti-proliferative response, such as p53/TP53, LOX and CDKN1A; apoptosis, such as BBC3/PUMA, CASP1, CASP7 and CASP8; immune response, such as IL7, IL12A/B and IL15, PTGS2/COX2 and CYBB; DNA damage responses and DNA repair, such as POLQ/POLH; MHC class I expression, such as TAP1, PSMB9/LMP2, PSME1/PA28A, PSME2/PA28B and B2M and MHC class II expression, such as CIITA; metabolic enzymes, such as ACOD1/IRG1. Represses genes involved in anti-proliferative response, such as BIRC5/survivin, CCNB1, CCNE1, CDK1, CDK2 and CDK4 and in immune response, such as FOXP3, IL4, ANXA2 and TLR4. Stimulates p53/TP53-dependent transcription through enhanced recruitment of EP300 leading to increased acetylation of p53/TP53. Plays an important role in immune response directly affecting NK maturation and activity, macrophage production of IL12, Th1 development and maturation of CD8+ T-cells. Also implicated in the differentiation and maturation of dendritic cells and in the suppression of regulatory T (Treg) cells development. Acts as a tumor suppressor and plays a role not only in antagonism of tumor cell growth but also in stimulating an immune response against tumor cells. The sequence is that of Interferon regulatory factor 1 (IRF1) from Homo sapiens (Human).